A 360-amino-acid chain; its full sequence is Peptide chain release factor 1 (360 aa).

Gln-235 is subject to N5-methylglutamine. The span at 281–307 shows a compositional bias: basic and acidic residues; that stretch reads ERQRADSERSADRRNQVGSGDRSERIR. The disordered stretch occupies residues 281–310; that stretch reads ERQRADSERSADRRNQVGSGDRSERIRTYN.

This sequence belongs to the prokaryotic/mitochondrial release factor family. Methylated by PrmC. Methylation increases the termination efficiency of RF1.

Its subcellular location is the cytoplasm. Functionally, peptide chain release factor 1 directs the termination of translation in response to the peptide chain termination codons UAG and UAA. The protein is Peptide chain release factor 1 of Sinorhizobium medicae (strain WSM419) (Ensifer medicae).